The primary structure comprises 162 residues: Transcription elongation factor GreA (162 aa).

The stretch at 1 to 28 (MQKEPMLEETYRKLSEELEQLKSVERGV) forms a coiled coil.

This sequence belongs to the GreA/GreB family.

Its function is as follows. Necessary for efficient RNA polymerase transcription elongation past template-encoded arresting sites. The arresting sites in DNA have the property of trapping a certain fraction of elongating RNA polymerases that pass through, resulting in locked ternary complexes. Cleavage of the nascent transcript by cleavage factors such as GreA or GreB allows the resumption of elongation from the new 3'terminus. GreA releases sequences of 2 to 3 nucleotides. The polypeptide is Transcription elongation factor GreA (Sulfurovum sp. (strain NBC37-1)).